Reading from the N-terminus, the 772-residue chain is Metabotropic glutamate receptor-like protein G (772 aa).

Positions 1 to 23 (MKKIIFLVLFLIFIFKDIKSSYG) are cleaved as a signal peptide. Residues 24–391 (VDLVNFKMIT…TQVKFSPSIQ (368 aa)) lie on the Extracellular side of the membrane. Asn-73, Asn-126, Asn-262, Asn-313, Asn-343, and Asn-378 each carry an N-linked (GlcNAc...) asparagine glycan. The chain crosses the membrane as a helical span at residues 392–412 (IGVSIVSGVLIAIVLLSMVGV). The Cytoplasmic portion of the chain corresponds to 413-426 (YKYRASSSIRSASP). The chain crosses the membrane as a helical span at residues 427 to 447 (IFLIFILFGALIVFGGIILWV). Residues 448 to 463 (SELNDHVCNGRLWMVT) are Extracellular-facing. A helical membrane pass occupies residues 464-484 (LGFSTLIGSLVVKNFRIWLIF). Over 485 to 500 (DNPELKTVKITNYQLY) the chain is Cytoplasmic. The chain crosses the membrane as a helical span at residues 501-521 (PWVACCLVINIILMSILTSLG). Residues 522 to 551 (DLREVDATGIDSLGKYEFLKICKMNNSGAS) are Extracellular-facing. An N-linked (GlcNAc...) asparagine glycan is attached at Asn-546. Residues 552-572 (VLYTILAYFGALLLTGVFVSW) traverse the membrane as a helical segment. Residues 573–586 (KIRIVDIEEFNESR) are Cytoplasmic-facing. A helical membrane pass occupies residues 587–607 (AIAHTLYAISFCLFVIVPLMI). Residues 608 to 616 (SPLEKQSET) lie on the Extracellular side of the membrane. The chain crosses the membrane as a helical span at residues 617–637 (IILSVAGLFITTAAVLIIFLP). Topologically, residues 638–772 (KFYRVYEYGE…QIEPDEKNQD (135 aa)) are cytoplasmic. Residues 664-772 (TARAESHKSS…QIEPDEKNQD (109 aa)) are disordered. The span at 718–728 (FTEESVSEIDE) shows a compositional bias: acidic residues. Residues 740–753 (PEINQSEQQNSEIE) are compositionally biased toward low complexity. The span at 754–763 (QPPPPPPPQQ) shows a compositional bias: pro residues.

This sequence in the N-terminal section; belongs to the BMP lipoprotein family. It in the C-terminal section; belongs to the G-protein coupled receptor 3 family. GABA-B receptor subfamily.

The protein resides in the membrane. This chain is Metabotropic glutamate receptor-like protein G (grlG), found in Dictyostelium discoideum (Social amoeba).